Reading from the N-terminus, the 152-residue chain is UPF0266 membrane protein YobD (152 aa).

A run of 3 helical transmembrane segments spans residues 6 to 26, 45 to 65, and 67 to 87; these read LVLI…QFIM, VDSV…VTSH, and AQMT…IFWI.

It belongs to the UPF0266 family.

It localises to the cell inner membrane. The protein is UPF0266 membrane protein YobD of Salmonella paratyphi A (strain ATCC 9150 / SARB42).